We begin with the raw amino-acid sequence, 65 residues long: Small ribosomal subunit protein eS17 (65 aa).

The protein belongs to the eukaryotic ribosomal protein eS17 family.

In Archaeoglobus fulgidus (strain ATCC 49558 / DSM 4304 / JCM 9628 / NBRC 100126 / VC-16), this protein is Small ribosomal subunit protein eS17.